Here is a 387-residue protein sequence, read N- to C-terminus: MASVTITSVHEPANPLAVAHTGEREVEGDQLIKTDTNNDNDIINTLLNNFLYPQELKHNVFVPRFQQRITIVKAWDILSLSTSPPNGTNGANGTNSAPHRPKDLHILDIGCGQGESAATMAALLQPHMHGARLHITGIDTARPDYGTPYTVAETHAHLTASALGRHISFRREDAAAFFSPSRLSSPSPPGSWPSAANVDAVTLCHSLWYFPTPQSVADLFTTLAGARVPRVYLAEYSFRGSLPGGQQDAHILAARAQALLHASVLEKLSADSSQQNHQGREPGPRAPNVRAALDVGSIVEAAAAAGWAVRRQGTFVPAADMIEGHLEARLVVKDAFAEAVRAEGLSPEREHEVLGLVPGVKEAFARLAEAGVAKGRAMDVWWAELER.

Residues 98 to 223 form a methyltransferase domain region; it reads PHRPKDLHIL…QSVADLFTTL (126 aa).

This sequence belongs to the class I-like SAM-binding methyltransferase superfamily. Erg6/SMT family.

Its pathway is mycotoxin biosynthesis. Methyltransferase; part of the gene cluster that mediates the biosynthesis of the phomopsins, a group of hexapeptide mycotoxins which infects lupins and causes lupinosis disease in livestock. Within the pathway, phomM' acts as an S-adenosylmethionine-dependent alpha-N-methyltransferase that catalyzes two successive N-methylation reactions, converting N-desmethyl-phomopsin A to phomopsin A and phomopsin A further to an N,N-dimethylated congener called phomopsin E. The pathway starts with the processing of the precursor phomA' by several endopeptidases including kexin proteases as well as the cluster-specific S41 family peptidase phomP1 and the oligopeptidase phomG' to produce 10 identical copies of the hexapeptide Tyr-Val-Ile-Pro-Ile-Asp. After being excised from the precursor peptide, the core peptides are cyclized and modified post-translationally by enzymes encoded within the gene cluster. The timing and order of proteolysis of the phomA' precursor and PTMs are still unknown. Two tyrosinase-like enzymes, phomQ1' and phomQ2, catalyze the chlorination and hydroxylation of Tyr, respectively. PhomYb, is proposed to be involved in the construction of the macrocyclic structure. The other 4 ustYa family proteins may be involved in PTMs that generate the unique structure of phomopsin A. PhomYa' is required for the hydroxylation of C-beta of Tyr. PhomYc', phomYd', and phomYe are responsible for the biosynthesis of 2,3-dehydroisoleucine (dIle), 2,3-dehydroaspartic acid (dAsp), and 3,4-dehydroproline (dPro), respectively. While dIle formation by phomYc' is indispensable for the installation of dAsp by phomYd', the order of the other PTMs have not been elucidated yet. Most of the biosynthetic enzymes likely have broad substrate specificity, and thus, there might be a metabolic grid from a precursor to phomopsin A. The enzyme(s) responsible for the biosynthesis of 3,4-dehydrovaline (dVal) have also not been identified yet. Finally, phomM' acts as an S-adenosylmethionine-dependent alpha-N-methyltransferase that catalyzes two successive N-methylation reactions, converting N-desmethyl-phomopsin A to phomopsin A and phomopsin A further to an N,N-dimethylated congener called phomopsin E. This chain is Methyltransferase phomM', found in Diaporthe leptostromiformis (Lupinosis disease fungus).